The primary structure comprises 202 residues: FMN reductase (NADH) RutF (202 aa).

A compositionally biased stretch (low complexity) spans 168–191 (PRAPRGGSAPAEPARGARAIGARP). The segment at 168–202 (PRAPRGGSAPAEPARGARAIGARPPEGPVLALRSA) is disordered.

This sequence belongs to the non-flavoprotein flavin reductase family. RutF subfamily.

It carries out the reaction FMNH2 + NAD(+) = FMN + NADH + 2 H(+). Functionally, catalyzes the reduction of FMN to FMNH2 which is used to reduce pyrimidine by RutA via the Rut pathway. The polypeptide is FMN reductase (NADH) RutF (Methylorubrum populi (strain ATCC BAA-705 / NCIMB 13946 / BJ001) (Methylobacterium populi)).